The following is a 285-amino-acid chain: Kanamycin B dioxygenase (285 aa).

This sequence belongs to the PhyH family. The cofactor is Fe cation.

The catalysed reaction is kanamycin B + 2-oxoglutarate + O2 = 2'-dehydrokanamycin A + succinate + NH4(+) + CO2. It participates in antibiotic biosynthesis; kanamycin biosynthesis. Functionally, mediates the conversion of kanamycin B into 2'-dehydrokanamycin A during the transformation of kanamycin B to kanamycin A. This chain is Kanamycin B dioxygenase (kanJ), found in Streptomyces kanamyceticus.